The sequence spans 28 residues: Ranatuerin-2LTa (28 aa).

A disulfide bridge links Cys-23 with Cys-28.

In terms of tissue distribution, expressed by the skin glands.

Its subcellular location is the secreted. Has antibacterial activity. This is Ranatuerin-2LTa from Rana latastei (Italian agile frog).